The primary structure comprises 574 residues: Septation ring formation regulator EzrA (574 aa).

At 1–7 (MSSGLIL) the chain is on the extracellular side. A helical membrane pass occupies residues 8–26 (LIVAIVLLVIIAYLVGVII). The Cytoplasmic portion of the chain corresponds to 27–574 (RKRNDTLITS…YEKTRERIRF (548 aa)). 4 coiled-coil regions span residues 102–131 (NFIRAKHEINSVESQLNLVEEDITAIREAL), 161–190 (ENEDNFGSTMAEIEKQMKNIEAEFSQFVAL), 276–379 (VTLD…QQEK), and 459–493 (QLEALMDELSRGRINIEAVSRLSEVATAAIANLEE).

This sequence belongs to the EzrA family.

The protein resides in the cell membrane. Negative regulator of FtsZ ring formation; modulates the frequency and position of FtsZ ring formation. Inhibits FtsZ ring formation at polar sites. Interacts either with FtsZ or with one of its binding partners to promote depolymerization. This is Septation ring formation regulator EzrA from Streptococcus equi subsp. zooepidemicus (strain MGCS10565).